Here is a 149-residue protein sequence, read N- to C-terminus: Ribonuclease H (149 aa).

Positions 1–142 constitute an RNase H type-1 domain; sequence MSDSVELFTD…ADQLANRGVD (142 aa). Mg(2+) contacts are provided by Asp10, Glu48, Asp70, and Asp134.

It belongs to the RNase H family. Monomer. The cofactor is Mg(2+).

It is found in the cytoplasm. The enzyme catalyses Endonucleolytic cleavage to 5'-phosphomonoester.. Functionally, endonuclease that specifically degrades the RNA of RNA-DNA hybrids. This chain is Ribonuclease H, found in Pseudomonas savastanoi pv. phaseolicola (strain 1448A / Race 6) (Pseudomonas syringae pv. phaseolicola (strain 1448A / Race 6)).